The following is a 439-amino-acid chain: uncharacterized protein (439 aa).

The signal sequence occupies residues 1 to 19 (MKKLLLTASIICLASAGLA).

This is an uncharacterized protein from Rickettsia felis (strain ATCC VR-1525 / URRWXCal2) (Rickettsia azadi).